A 220-amino-acid chain; its full sequence is Transcriptional regulatory protein LnrK (220 aa).

The 117-residue stretch at 3 to 119 (KIIITDDQDI…TIVKAVMTVH (117 aa)) folds into the Response regulatory domain. At Asp54 the chain carries 4-aspartylphosphate. An HTH luxR-type domain is found at 151-216 (KPNELLDLTE…QAAIYSVRYG (66 aa)). The H-T-H motif DNA-binding region spans 175–194 (NKEIAEKLYITEGTVKNHVS).

Post-translationally, phosphorylated by LnrJ.

Its subcellular location is the cytoplasm. Its function is as follows. Required for resistance to linearmycins, a family of antibiotic-specialized metabolites produced by some streptomycetes. Member of the two-component regulatory system LnrJ/LnrK, which induces expression of the LnrLMN ABC transporter in response to linearmycins and other polyenes. Probably binds to the promoter region of the lnrLMN operon and directly regulates its expression. May also promote biofilm formation. The protein is Transcriptional regulatory protein LnrK of Bacillus subtilis (strain 168).